The following is a 413-amino-acid chain: 2,3-diketo-5-methylthiopentyl-1-phosphate enolase (413 aa).

The Proton acceptor role is filled by lysine 98. Substrate-binding positions include lysine 147, 173-176 (KDDE), histidine 264, glycine 337, and 359-360 (GG). Lysine 173, aspartate 175, and glutamate 176 together coordinate Mg(2+). N6-carboxylysine is present on lysine 173.

Belongs to the RuBisCO large chain family. Type IV subfamily. As to quaternary structure, homodimer. The cofactor is Mg(2+).

It carries out the reaction 5-methylsulfanyl-2,3-dioxopentyl phosphate = 2-hydroxy-5-methylsulfanyl-3-oxopent-1-enyl phosphate. It participates in amino-acid biosynthesis; L-methionine biosynthesis via salvage pathway; L-methionine from S-methyl-5-thio-alpha-D-ribose 1-phosphate: step 3/6. Functionally, catalyzes the enolization of 2,3-diketo-5-methylthiopentyl-1-phosphate (DK-MTP-1-P) into 2-hydroxy-3-keto-5-methylthiopentenyl-1-phosphate (HK-MTPenyl-1-P). In Geobacillus thermodenitrificans (strain NG80-2), this protein is 2,3-diketo-5-methylthiopentyl-1-phosphate enolase.